A 129-amino-acid chain; its full sequence is ATP synthase epsilon chain (129 aa).

The protein belongs to the ATPase epsilon chain family. In terms of assembly, F-type ATPases have 2 components, CF(1) - the catalytic core - and CF(0) - the membrane proton channel. CF(1) has five subunits: alpha(3), beta(3), gamma(1), delta(1), epsilon(1). CF(0) has three main subunits: a, b and c.

The protein resides in the cell inner membrane. In terms of biological role, produces ATP from ADP in the presence of a proton gradient across the membrane. The protein is ATP synthase epsilon chain of Campylobacter curvus (strain 525.92).